Consider the following 536-residue polypeptide: Glyco-Gag protein (536 aa).

Residues 1–54 are Cytoplasmic-facing; sequence MSGASSGTATGARLFGISSVLGEYRVLIGDEGAGPSRSPSEVSFSVWYRSRAAR. The helical transmembrane segment at 55–75 threads the bilayer; that stretch reads LVILCLVASFLVPCLTFLIAE. Residues 76 to 536 lie on the Extracellular side of the membrane; that stretch reads TVMGQTVTTP…TQNRNKDREE (461 aa). N-linked (GlcNAc...) asparagine; by host glycosylation occurs at N137. Disordered regions lie at residues 174–284 and 494–536; these read VRPF…NNRP and ETPE…DREE. A compositionally biased stretch (pro residues) spans 177 to 198; the sequence is FLPPPKPPTPLPQPLSPQPSAP. The span at 199–209 shows a compositional bias: low complexity; sequence PTSSLYPVLPK. 2 stretches are compositionally biased toward pro residues: residues 210 to 223 and 233 to 246; these read TNPPKPPVLPPDPS and EPPPYPGGHGPPPS. Positions 494–511 are enriched in basic and acidic residues; that stretch reads ETPEEREERLWQRQEERD.

Post-translationally, glycosylated by host. Cleaved by host near the middle of the molecule, releasing the c-terminal half containing capsid and nucleoprotein domains op GAG.

It is found in the host cell membrane. In terms of biological role, plays a role in viral particle release. Presumably acts by facilitating the fission of the virion bud at the cell surface. In Feline sarcoma virus (strain McDonough), this protein is Glyco-Gag protein.